The sequence spans 676 residues: Symportin 1 (676 aa).

Over residues 1–10 the composition is skewed to basic residues; that stretch reads MGKTRRNRVR. The disordered stretch occupies residues 1–28; it reads MGKTRRNRVRNRTDPIAKPVKPPTDPEL. The ARM 1 repeat unit spans residues 183-216; it reads TILRLLFRLISADIAPQDIYEEAISCLTTLSEDN. A disordered region spans residues 325–385; it reads KGNQGSRESP…EDDEDDDDDS (61 aa). Acidic residues-rich tracts occupy residues 338–354 and 363–385; these read ADEE…DAMD and EDQE…DDDS. The stretch at 420-453 is one ARM 2 repeat; it reads TAVPQLIRLSNLPIDSDESLTIQSHALSALNNIS.

The protein belongs to the nuclear import and ribosome assembly adapter family. As to quaternary structure, component of a hexameric 5S RNP precursor complex, composed of 5S RNA, RRS1, RPF2, RPL5, RPL11 and SYO1; this complex acts as a precursor for ribosome assembly.

In terms of biological role, involved in ribosomal large subunit assembly. This Chaetomium thermophilum (strain DSM 1495 / CBS 144.50 / IMI 039719) (Thermochaetoides thermophila) protein is Symportin 1.